A 39-amino-acid polypeptide reads, in one-letter code: Protein disulfide-isomerase A3 (39 aa).

This sequence belongs to the protein disulfide isomerase family. Part of the major histocompatibility complex class I (MHC I) peptide loading complex composed of TAP1, TAP2, B2M, MHC heavy chain, TAPBP, PDIA3, and CALR. Interacts with ERP27 and CANX. Interacts with SERPINA2 and with SERPINA1. Interacts with ATP2A2. In terms of processing, within the major histocompatibility complex class I (MHC I) peptide loading complex forms reversible disulfide-linked heterodimers with TAPBP as part of its protein folding chaperone activity. This is essential to assist the dynamic assembly of the MHC I complex with high affinity antigens in the endoplasmic reticulum. Phosphorylated. In terms of tissue distribution, predominantly expressed in liver. Low in brain, testis and colon. Not detectable in pancreas and skeletal muscle.

The protein resides in the endoplasmic reticulum. It localises to the endoplasmic reticulum lumen. Its subcellular location is the melanosome. It catalyses the reaction Catalyzes the rearrangement of -S-S- bonds in proteins.. Functionally, protein disulfide isomerase that catalyzes the formation, isomerization, and reduction or oxidation of disulfide bonds in client proteins and functions as a protein folding chaperone. Core component of the major histocompatibility complex class I (MHC I) peptide loading complex where it functions as an essential folding chaperone for TAPBP. Through TAPBP, assists the dynamic assembly of the MHC I complex with high affinity antigens in the endoplasmic reticulum. Therefore, plays a crucial role in the presentation of antigens to cytotoxic T cells in adaptive immunity. The sequence is that of Protein disulfide-isomerase A3 (PDIA3) from Papio hamadryas (Hamadryas baboon).